We begin with the raw amino-acid sequence, 407 residues long: Na(+)-translocating NADH-quinone reductase subunit F (407 aa).

A helical transmembrane segment spans residues 3–23; that stretch reads IILGVVMFTLIVLALTVMILF. Positions 32 to 126 constitute a 2Fe-2S ferredoxin-type domain; it reads GDITVEINED…NLKIELPEEI (95 aa). 4 residues coordinate [2Fe-2S] cluster: C69, C75, C78, and C110. Positions 129 to 269 constitute an FAD-binding FR-type domain; it reads VKKWTCEVIS…SGPFGEFFAK (141 aa).

The protein belongs to the NqrF family. As to quaternary structure, composed of six subunits; NqrA, NqrB, NqrC, NqrD, NqrE and NqrF. [2Fe-2S] cluster serves as cofactor. FAD is required as a cofactor.

It is found in the cell inner membrane. It catalyses the reaction a ubiquinone + n Na(+)(in) + NADH + H(+) = a ubiquinol + n Na(+)(out) + NAD(+). Its function is as follows. NQR complex catalyzes the reduction of ubiquinone-1 to ubiquinol by two successive reactions, coupled with the transport of Na(+) ions from the cytoplasm to the periplasm. The first step is catalyzed by NqrF, which accepts electrons from NADH and reduces ubiquinone-1 to ubisemiquinone by a one-electron transfer pathway. This is Na(+)-translocating NADH-quinone reductase subunit F from Yersinia pseudotuberculosis serotype O:1b (strain IP 31758).